Reading from the N-terminus, the 109-residue chain is Large ribosomal subunit protein uL22 (109 aa).

It belongs to the universal ribosomal protein uL22 family. Part of the 50S ribosomal subunit.

In terms of biological role, this protein binds specifically to 23S rRNA; its binding is stimulated by other ribosomal proteins, e.g. L4, L17, and L20. It is important during the early stages of 50S assembly. It makes multiple contacts with different domains of the 23S rRNA in the assembled 50S subunit and ribosome. Its function is as follows. The globular domain of the protein is located near the polypeptide exit tunnel on the outside of the subunit, while an extended beta-hairpin is found that lines the wall of the exit tunnel in the center of the 70S ribosome. The polypeptide is Large ribosomal subunit protein uL22 (Dehalococcoides mccartyi (strain ATCC BAA-2266 / KCTC 15142 / 195) (Dehalococcoides ethenogenes (strain 195))).